Reading from the N-terminus, the 289-residue chain is Shikimate dehydrogenase (NADP(+)) (289 aa).

Residues 20 to 22 and Ser67 each bind shikimate; that span reads SIS. The active-site Proton acceptor is the Lys71. Residues Asn92 and Asp107 each coordinate shikimate. NADP(+) contacts are provided by residues 132 to 136 and Val230; that span reads GGGGA. Residue Tyr232 participates in shikimate binding. Gly253 contacts NADP(+).

This sequence belongs to the shikimate dehydrogenase family. As to quaternary structure, homodimer.

The enzyme catalyses shikimate + NADP(+) = 3-dehydroshikimate + NADPH + H(+). The protein operates within metabolic intermediate biosynthesis; chorismate biosynthesis; chorismate from D-erythrose 4-phosphate and phosphoenolpyruvate: step 4/7. Involved in the biosynthesis of the chorismate, which leads to the biosynthesis of aromatic amino acids. Catalyzes the reversible NADPH linked reduction of 3-dehydroshikimate (DHSA) to yield shikimate (SA). This chain is Shikimate dehydrogenase (NADP(+)), found in Streptococcus mutans serotype c (strain ATCC 700610 / UA159).